The primary structure comprises 254 residues: H-2 class II histocompatibility antigen, I-E alpha chain (254 aa).

The N-terminal stretch at 1–24 (RSRALILGVLALTTMLSLCGGEDD) is a signal peptide. Positions 25-109 (IEADHVAFYG…KDSNFTPAAN (85 aa)) are alpha-1. Over 25–216 (IEADHVAFYG…IPAPMSELTE (192 aa)) the chain is Extracellular. N-linked (GlcNAc...) asparagine glycans are attached at residues asparagine 103 and asparagine 143. Residues 110 to 203 (EAPQATVFPK…GLEEPVLKHW (94 aa)) form an alpha-2 region. In terms of domain architecture, Ig-like C1-type spans 112–204 (PQATVFPKSP…LEEPVLKHWE (93 aa)). Cysteine 132 and cysteine 188 are disulfide-bonded. The tract at residues 204–216 (EPEIPAPMSELTE) is connecting peptide. The helical transmembrane segment at 217–242 (TVVCALGLSVGLVGIVVGTIFIIQGL) threads the bilayer. Topologically, residues 243 to 254 (RSGGTSRHPGPL) are cytoplasmic.

Belongs to the MHC class II family.

The protein resides in the membrane. This chain is H-2 class II histocompatibility antigen, I-E alpha chain, found in Mus musculus (Mouse).